A 250-amino-acid polypeptide reads, in one-letter code: 2,3-bisphosphoglycerate-dependent phosphoglycerate mutase (250 aa).

Substrate-binding positions include 10–17 (RHGESQWN), 23–24 (TG), arginine 62, 89–92 (ERHY), lysine 100, 116–117 (RR), and 185–186 (GN). Histidine 11 acts as the Tele-phosphohistidine intermediate in catalysis. The active-site Proton donor/acceptor is glutamate 89.

It belongs to the phosphoglycerate mutase family. BPG-dependent PGAM subfamily. In terms of assembly, homodimer.

It carries out the reaction (2R)-2-phosphoglycerate = (2R)-3-phosphoglycerate. It participates in carbohydrate degradation; glycolysis; pyruvate from D-glyceraldehyde 3-phosphate: step 3/5. In terms of biological role, catalyzes the interconversion of 2-phosphoglycerate and 3-phosphoglycerate. This Pectobacterium carotovorum subsp. carotovorum (strain PC1) protein is 2,3-bisphosphoglycerate-dependent phosphoglycerate mutase.